Reading from the N-terminus, the 1002-residue chain is Hypoxia up-regulated protein 1 (1002 aa).

Residues methionine 1–proline 23 form the signal peptide. Disordered regions lie at residues leucine 576–glutamine 698 and lysine 918–leucine 1002. A compositionally biased stretch (basic and acidic residues) spans proline 643–serine 675. A compositionally biased stretch (polar residues) spans glycine 933–proline 947. 2 stretches are compositionally biased toward basic and acidic residues: residues glycine 951 to proline 962 and serine 983 to leucine 1002. The Prevents secretion from ER motif lies at asparagine 999–leucine 1002.

The protein belongs to the heat shock protein 70 family.

The protein localises to the endoplasmic reticulum lumen. In terms of biological role, has a pivotal role in cytoprotective cellular mechanisms triggered by oxygen deprivation. Promotes HSPA5/BiP-mediated ATP nucleotide exchange and thereby activates the unfolded protein response (UPR) pathway in the presence of endoplasmic reticulum stress. May play a role as a molecular chaperone and participate in protein folding. The chain is Hypoxia up-regulated protein 1 (HYOU1) from Gallus gallus (Chicken).